The following is a 290-amino-acid chain: 33 kDa chaperonin (290 aa).

Disulfide bonds link cysteine 235-cysteine 237 and cysteine 268-cysteine 271.

The protein belongs to the HSP33 family. Post-translationally, under oxidizing conditions two disulfide bonds are formed involving the reactive cysteines. Under reducing conditions zinc is bound to the reactive cysteines and the protein is inactive.

It localises to the cytoplasm. Redox regulated molecular chaperone. Protects both thermally unfolding and oxidatively damaged proteins from irreversible aggregation. Plays an important role in the bacterial defense system toward oxidative stress. This chain is 33 kDa chaperonin, found in Streptococcus equi subsp. equi (strain 4047).